Here is a 425-residue protein sequence, read N- to C-terminus: CAAX prenyl protease 1 homolog (425 aa).

5 consecutive transmembrane segments (helical) span residues 3 to 23 (LPYL…ETYL), 62 to 80 (FHFI…ILYY), 109 to 129 (LAFL…FSLY), 155 to 175 (GILL…IIVQ), and 188 to 208 (FMFA…APLF). Residue His-284 coordinates Zn(2+). Residue Glu-285 is part of the active site. His-288 serves as a coordination point for Zn(2+). 2 helical membrane passes run 295–315 (VYSF…YTLV) and 332–352 (VIIG…LLSF). Position 362 (Glu-362) interacts with Zn(2+). Asp-366 functions as the Proton donor in the catalytic mechanism.

This sequence belongs to the peptidase M48A family. Zn(2+) serves as cofactor.

Its subcellular location is the endoplasmic reticulum membrane. The enzyme catalyses Hydrolyzes the peptide bond -P2-(S-farnesyl or geranylgeranyl)C-P1'-P2'-P3'-COOH where P1' and P2' are amino acids with aliphatic side chains and P3' is any C-terminal residue.. Functionally, proteolytically removes the C-terminal three residues of farnesylated proteins. This is CAAX prenyl protease 1 homolog (FACE1) from Oryza sativa subsp. japonica (Rice).